Consider the following 169-residue polypeptide: Peptide methionine sulfoxide reductase MsrA 1 (169 aa).

Cys12 is a catalytic residue.

Belongs to the MsrA Met sulfoxide reductase family.

It catalyses the reaction L-methionyl-[protein] + [thioredoxin]-disulfide + H2O = L-methionyl-(S)-S-oxide-[protein] + [thioredoxin]-dithiol. It carries out the reaction [thioredoxin]-disulfide + L-methionine + H2O = L-methionine (S)-S-oxide + [thioredoxin]-dithiol. Functionally, has an important function as a repair enzyme for proteins that have been inactivated by oxidation. Catalyzes the reversible oxidation-reduction of methionine sulfoxide in proteins to methionine. The chain is Peptide methionine sulfoxide reductase MsrA 1 (msrA1) from Staphylococcus aureus (strain Mu50 / ATCC 700699).